The following is a 750-amino-acid chain: Pesticidal crystal protein Cry11Bb (750 aa).

The segment at Gln672 to Val750 is disordered.

The protein belongs to the delta endotoxin family.

Its function is as follows. Promotes colloidosmotic lysis by binding to the midgut epithelial cells of mosquito larvae such as Aedes aegypti, Anopheles albimanus and Culex quinquefasciatus. This is Pesticidal crystal protein Cry11Bb (cry11Bb) from Bacillus thuringiensis subsp. medellin.